The primary structure comprises 272 residues: S-adenosylmethionine decarboxylase proenzyme (272 aa).

Ser122 acts as the Schiff-base intermediate with substrate; via pyruvic acid in catalysis. Ser122 bears the Pyruvic acid (Ser); by autocatalysis mark. The Proton acceptor; for processing activity role is filled by His127. The active-site Proton donor; for catalytic activity is Cys150.

The protein belongs to the prokaryotic AdoMetDC family. Type 2 subfamily. Heterooctamer of four alpha and four beta chains arranged as a tetramer of alpha/beta heterodimers. Pyruvate is required as a cofactor. Is synthesized initially as an inactive proenzyme. Formation of the active enzyme involves a self-maturation process in which the active site pyruvoyl group is generated from an internal serine residue via an autocatalytic post-translational modification. Two non-identical subunits are generated from the proenzyme in this reaction, and the pyruvate is formed at the N-terminus of the alpha chain, which is derived from the carboxyl end of the proenzyme. The post-translation cleavage follows an unusual pathway, termed non-hydrolytic serinolysis, in which the side chain hydroxyl group of the serine supplies its oxygen atom to form the C-terminus of the beta chain, while the remainder of the serine residue undergoes an oxidative deamination to produce ammonia and the pyruvoyl group blocking the N-terminus of the alpha chain.

The catalysed reaction is S-adenosyl-L-methionine + H(+) = S-adenosyl 3-(methylsulfanyl)propylamine + CO2. It functions in the pathway amine and polyamine biosynthesis; S-adenosylmethioninamine biosynthesis; S-adenosylmethioninamine from S-adenosyl-L-methionine: step 1/1. Its function is as follows. Catalyzes the decarboxylation of S-adenosylmethionine to S-adenosylmethioninamine (dcAdoMet), the propylamine donor required for the synthesis of the polyamines spermine and spermidine from the diamine putrescine. This chain is S-adenosylmethionine decarboxylase proenzyme, found in Clostridium botulinum (strain Alaska E43 / Type E3).